The chain runs to 504 residues: Sodium-coupled neutral amino acid symporter 2 (504 aa).

A disordered region spans residues 1 to 22 (MKKTEMGRFNISPDEDSSSYSS). Topologically, residues 1 to 76 (MKKTEMGRFN…HPGTTSFGMS (76 aa)) are cytoplasmic. Residues 1–96 (MKKTEMGRFN…SGILGLSYAM (96 aa)) are regulates protein turnover upon amino acid deprivation. 4 positions are modified to phosphoserine: Ser-12, Ser-21, Ser-22, and Ser-55. The chain crosses the membrane as a helical span at residues 77–96 (VFNLSNAIVGSGILGLSYAM). Asn-82 is a Na(+) binding site. Over 97–102 (ANTGIA) the chain is Extracellular. A helical transmembrane segment spans residues 103–123 (LFIILLTFVSIFSLYSVHLLL). Topologically, residues 124 to 158 (KTANEGGSLLYEQLGHKAYGLAGKLAASGSITMQN) are cytoplasmic. A helical membrane pass occupies residues 159 to 177 (IGAMSSYLFIVKYELPLVI). Residues 178 to 188 (KALMNIEDTNG) are Extracellular-facing. Residues 189-209 (LWYLNGDYLVLLVSFVLILPL) form a helical membrane-spanning segment. Residues 210–217 (SLLRNLGY) lie on the Cytoplasmic side of the membrane. Residues 218–238 (LGYTSGLSLLCMIFFLIVVIC) form a helical membrane-spanning segment. Residues 239–290 (KKFQIPCPVEVALMANETVNGTFTQVALAALASNSTAADTCRPRYFIFNSQT) are Extracellular-facing. Cysteines 245 and 279 form a disulfide. 3 N-linked (GlcNAc...) asparagine glycosylation sites follow: Asn-254, Asn-258, and Asn-272. The helical transmembrane segment at 291 to 311 (VYAVPILTFSFVCHPAVLPIY) threads the bilayer. At 312-327 (EELKSRSRRRMMNVSK) the chain is on the cytoplasmic side. The helical transmembrane segment at 328–348 (ISFFAMFLMYLLAALFGYLTF) threads the bilayer. Over 349-369 (YEHVESELLHTYSAIVGTDIL) the chain is Extracellular. Residues 370-390 (LLVVRLAVLVAVTLTVPVVIF) traverse the membrane as a helical segment. Thr-384 is a Na(+) binding site. The Cytoplasmic segment spans residues 391-411 (PIRSSVTHLLCPTKEFSWFRH). The chain crosses the membrane as a helical span at residues 412–432 (SVITVTILAFTNLLVIFVPTI). Over 433-434 (RD) the chain is Extracellular. The helical transmembrane segment at 435-455 (IFGFIGASAAAMLIFILPSAF) threads the bilayer. The Cytoplasmic segment spans residues 456 to 470 (YIKLVKKEPMRSVQK). A helical membrane pass occupies residues 471–493 (IGALCFLLSGVVVMIGSMGLIVL). Residues 494-504 (DWVHDASAGGH) lie on the Extracellular side of the membrane.

Belongs to the amino acid/polyamine transporter 2 family. Polyubiquitination by NEDD4L regulates the degradation and the activity of SLC38A2. Widely expressed. Expressed in skeletal muscle and adipose tissue (at protein level). Expressed by glutamatergic and GABAergic neurons together with astrocytes and other non-neuronal cells in the cerebral cortex (at protein level). Widely expressed in the central nervous systeme where, it is enriched in the spinal cord and the brainstem nuclei, especially those of the auditory system.

It is found in the cell membrane. It catalyses the reaction L-alanine(in) + Na(+)(in) = L-alanine(out) + Na(+)(out). It carries out the reaction glycine(in) + Na(+)(in) = glycine(out) + Na(+)(out). The catalysed reaction is L-serine(in) + Na(+)(in) = L-serine(out) + Na(+)(out). The enzyme catalyses L-proline(in) + Na(+)(in) = L-proline(out) + Na(+)(out). It catalyses the reaction L-methionine(in) + Na(+)(in) = L-methionine(out) + Na(+)(out). It carries out the reaction L-histidine(in) + Na(+)(in) = L-histidine(out) + Na(+)(out). The catalysed reaction is L-asparagine(in) + Na(+)(in) = L-asparagine(out) + Na(+)(out). The enzyme catalyses L-glutamine(in) + Na(+)(in) = L-glutamine(out) + Na(+)(out). It catalyses the reaction L-threonine(in) + Na(+)(in) = L-threonine(out) + Na(+)(out). It carries out the reaction L-leucine(in) + Na(+)(in) = L-leucine(out) + Na(+)(out). The catalysed reaction is L-phenylalanine(in) + Na(+)(in) = L-phenylalanine(out) + Na(+)(out). With respect to regulation, inhibited by N-methyl-D-glucamine. Inhibited by choline. Allosteric regulation of sodium ions binding by pH. Its function is as follows. Symporter that cotransports neutral amino acids and sodium ions from the extracellular to the intracellular side of the cell membrane. The transport is pH-sensitive, Li(+)-intolerant, electrogenic, driven by the Na(+) electrochemical gradient and cotransports of neutral amino acids and sodium ions with a stoichiometry of 1:1. May function in the transport of amino acids at the blood-brain barrier. May function in the transport of amino acids in the supply of maternal nutrients to the fetus through the placenta. Maintains a key metabolic glutamine/glutamate balance underpinning retrograde signaling by dendritic release of the neurotransmitter glutamate. Transports L-proline in differentiating osteoblasts for the efficient synthesis of proline-enriched proteins and provides proline essential for osteoblast differentiation and bone formation during bone development. In Rattus norvegicus (Rat), this protein is Sodium-coupled neutral amino acid symporter 2.